A 594-amino-acid chain; its full sequence is Zinc finger protein 37 (594 aa).

The interval 1-253 (MATSEPAESD…KPEKAPGSGK (253 aa)) is disordered. Threonine 3 carries the post-translational modification Phosphothreonine. The region spanning 3–74 (TSEPAESDAV…GKKASPSSLK (72 aa)) is the KRAB domain. Serine 9 is modified (phosphoserine). Residues 10 to 33 (DAVRAKEWEQLEPVQRDVYKDTKL) are compositionally biased toward basic and acidic residues. The segment covering 34-46 (ENCSNPASMGNQD) has biased composition (polar residues). Over residues 89 to 111 (QQDDEHREEKQKSQSKLTKEVTL) the composition is skewed to basic and acidic residues. Residues 145-158 (KSSSRGKNSNQNSD) are compositionally biased toward polar residues. Basic and acidic residues-rich tracts occupy residues 159-172 (SLKKKPDTANDHRK) and 181-234 (VNKD…TGEK). 12 consecutive C2H2-type zinc fingers follow at residues 255 to 277 (YECNHCGKVLSHKQGLLDHQRTH), 283 to 305 (YECNECGIAFSQKSHLVVHQRTH), 311 to 324 (YECEQCGKAHGHKH), 339 to 361 (YKCNECGKTFRHSSNLMQHLRSH), 367 to 389 (YECKECGKSFRYNSSLTEHVRTH), 395 to 417 (YECNECGKAFKYGSSLTKHMRIH), 423 to 445 (FECNECGKTFSKKSHLVIHQRTH), 451 to 473 (YKCDECGKAFGHSSSLTYHMRTH), 479 to 501 (FECNQCGKAFKQIEGLTQHQRVH), 507 to 529 (YECVECGKAFSQKSHLIVHQRTH), 535 to 557 (FECYECGKAFNAKSQLVIHQRSH), and 563 to 585 (YECIECGKAFKQNASLTKHMKIH).

The protein belongs to the krueppel C2H2-type zinc-finger protein family. As to expression, expressed in testis and brain.

Its subcellular location is the nucleus. May have a role in regulating spermiogenesis. The sequence is that of Zinc finger protein 37 (Zfp37) from Mus musculus (Mouse).